We begin with the raw amino-acid sequence, 171 residues long: Inosine/xanthosine triphosphatase (171 aa).

8–13 is a binding site for substrate; that stretch reads TTNPAK. Mg(2+)-binding residues include aspartate 38 and glutamine 68.

It belongs to the YjjX NTPase family. Homodimer. It depends on Mg(2+) as a cofactor. Requires Mn(2+) as cofactor.

The enzyme catalyses XTP + H2O = XDP + phosphate + H(+). It carries out the reaction ITP + H2O = IDP + phosphate + H(+). Phosphatase that hydrolyzes non-canonical purine nucleotides such as XTP and ITP to their respective diphosphate derivatives. Probably excludes non-canonical purines from DNA/RNA precursor pool, thus preventing their incorporation into DNA/RNA and avoiding chromosomal lesions. The chain is Inosine/xanthosine triphosphatase from Cronobacter sakazakii (strain ATCC BAA-894) (Enterobacter sakazakii).